The primary structure comprises 1548 residues: Dicer-like protein 1 (1548 aa).

Residues 1-41 show a composition bias toward basic and acidic residues; it reads MGDPAAHEMADLERGFSSEDDAEYRSGDDEASKFVENEPSK. Residues 1 to 48 are disordered; it reads MGDPAAHEMADLERGFSSEDDAEYRSGDDEASKFVENEPSKRGKISQK. One can recognise a Helicase ATP-binding domain in the interval 106–289; sequence LFERAKQQNT…QAAIELEGLL (184 aa). An ATP-binding site is contributed by 119-126; it reads LDTGSGKT. Residues 232–235 carry the DEAH box motif; it reads DEAH. Positions 428 to 589 constitute a Helicase C-terminal domain; it reads TLSKLLEEYF…FCNTQPEDRL (162 aa). The Dicer dsRNA-binding fold domain maps to 624 to 718; it reads SLPILQAFLN…RSKFVEKRHV (95 aa). Positions 871–1006 constitute a PAZ domain; it reads PLLRHVADRD…FVLEPMRISP (136 aa). RNase III domains lie at 1051–1197 and 1248–1411; these read LTKD…MTTR and AQKI…VDSK. 3 residues coordinate Mg(2+): Glu-1288, Asp-1397, and Glu-1400. A DRBM domain is found at 1445–1518; it reads TFFTQYVFET…ARKALDKLRS (74 aa). The Zn(2+) site is built by Cys-1457, His-1489, Cys-1530, and Cys-1532.

This sequence belongs to the helicase family. Dicer subfamily. The cofactor is Mg(2+). Mn(2+) is required as a cofactor.

Its function is as follows. Dicer-like endonuclease involved in cleaving double-stranded RNA in the RNA interference (RNAi) pathway. Produces 21 to 25 bp dsRNAs (siRNAs) which target the selective destruction of homologous RNAs leading to sequence-specific suppression of gene expression, called post-transcriptional gene silencing (PTGS). Part of a broad host defense response against viral infection and transposons. This chain is Dicer-like protein 1 (DCL-1), found in Cryphonectria parasitica (Chestnut blight fungus).